A 362-amino-acid polypeptide reads, in one-letter code: UPF0324 membrane protein YPO1307/y2878/YP_1285 (362 aa).

The next 9 helical transmembrane spans lie at 21–38 (YIPG…ALNV), 48–70 (GLGA…YPWL), 102–124 (VADV…FILA), 139–161 (VMLI…EPVL), 168–190 (VAVA…PWLY), 240–257 (MIRV…SAYL), 278–300 (WFAV…AVWV), 305–327 (TLDT…IGSI), and 334–356 (PLLL…NLFV).

This sequence belongs to the UPF0324 family.

The protein localises to the cell membrane. In Yersinia pestis, this protein is UPF0324 membrane protein YPO1307/y2878/YP_1285.